We begin with the raw amino-acid sequence, 377 residues long: Naringenin,2-oxoglutarate 3-dioxygenase (377 aa).

One can recognise a Fe2OG dioxygenase domain in the interval 193–297 (CVDMDQKVVV…RLSIATFQNP (105 aa)). Residues His220, Asp222, and His278 each coordinate Fe cation. Arg288 provides a ligand contact to 2-oxoglutarate.

This sequence belongs to the iron/ascorbate-dependent oxidoreductase family. Fe(2+) serves as cofactor. The cofactor is L-ascorbate.

The enzyme catalyses a (2S)-flavan-4-one + 2-oxoglutarate + O2 = a (2R,3R)-dihydroflavonol + succinate + CO2. It functions in the pathway secondary metabolite biosynthesis; flavonoid biosynthesis. Functionally, catalyzes the 3-beta-hydroxylation of 2S-flavanones to 2R,3R-dihydroflavonols which are intermediates in the biosynthesis of flavonols, anthocyanidins, catechins and proanthocyanidins in plants. In Hordeum vulgare (Barley), this protein is Naringenin,2-oxoglutarate 3-dioxygenase.